Reading from the N-terminus, the 299-residue chain is Farnesyl diphosphate synthase (299 aa).

Isopentenyl diphosphate is bound by residues K45, R48, and H77. Mg(2+)-binding residues include D84 and D90. R95 is a binding site for (2E)-geranyl diphosphate. R96 provides a ligand contact to isopentenyl diphosphate. (2E)-geranyl diphosphate contacts are provided by K181, T182, Q220, and K237.

The protein belongs to the FPP/GGPP synthase family. Mg(2+) serves as cofactor.

The protein resides in the cytoplasm. The catalysed reaction is isopentenyl diphosphate + (2E)-geranyl diphosphate = (2E,6E)-farnesyl diphosphate + diphosphate. This chain is Farnesyl diphosphate synthase (ispA), found in Escherichia coli (strain K12).